Here is a 160-residue protein sequence, read N- to C-terminus: Thy-1 membrane glycoprotein (160 aa).

The first 19 residues, 1 to 19 (MNPTVSIAVILTVLQAAHC), serve as a signal peptide directing secretion. Q20 carries the post-translational modification Pyrrolidone carboxylic acid. The Ig-like V-type domain maps to 20 to 120 (QMIRDLSACL…YTGNQIKNIT (101 aa)). Disulfide bonds link C28–C129 and C38–C103. N42, N78, and N118 each carry an N-linked (GlcNAc...) asparagine glycan. A lipid anchor (GPI-anchor amidated cysteine) is attached at C129. The propeptide at 130 to 160 (VRLSLLIQNTSWLLLLLLSLPLLQAVDFVSL) is removed in mature form. N138 is a glycosylation site (N-linked (GlcNAc...) asparagine).

Post-translationally, the N-terminus is blocked. Forebrain, cerebellum and tectum.

The protein resides in the cell membrane. Functionally, may play a role in cell-cell or cell-ligand interactions during synaptogenesis and other events in the brain. The sequence is that of Thy-1 membrane glycoprotein (THY1) from Gallus gallus (Chicken).